We begin with the raw amino-acid sequence, 308 residues long: Beta-1,3-galactosyltransferase 5 (308 aa).

The Cytoplasmic portion of the chain corresponds to 1 to 7; the sequence is MAHMKTR. The helical; Signal-anchor for type II membrane protein transmembrane segment at 8–25 threads the bilayer; the sequence is LVYASILMMGALCLYFSM. Residues 26-308 lie on the Lumenal side of the membrane; that stretch reads DSFRELPFVF…NSKEQDCPAV (283 aa). Residues N128, N172, and N229 are each glycosylated (N-linked (GlcNAc...) asparagine).

The protein belongs to the glycosyltransferase 31 family. As to expression, expressed in brain and kidney.

It is found in the golgi apparatus membrane. It carries out the reaction a globoside Gb4Cer (d18:1(4E)) + UDP-alpha-D-galactose = a globoside GalGb4Cer (d18:1(4E)) + UDP + H(+). It participates in protein modification; protein glycosylation. Functionally, catalyzes the transfer of Gal to GlcNAc-based acceptors with a preference for the core3 O-linked glycan GlcNAc(beta1,3)GalNAc structure. Can use glycolipid LC3Cer as an efficient acceptor. Also catalyzes the transfer of Gal to the terminal GalNAc unit of the globoside GB4, thereby synthesizing the glycolipid GB5, also known as the stage-specific embryonic antigen-3 (SSEA-3). The sequence is that of Beta-1,3-galactosyltransferase 5 from Mus musculus (Mouse).